The chain runs to 70 residues: uncharacterized protein (70 aa).

Residues 21–43 (YECPICGEIYIKRKSMITHLRKH) form a C2H2-type zinc finger.

This is an uncharacterized protein from Saccharolobus islandicus (Sulfolobus islandicus).